We begin with the raw amino-acid sequence, 221 residues long: CDC5 pindle pole body anchor protein 1 (221 aa).

The tract at residues 142 to 221 is disordered; sequence KNIERDNLKP…PTEDSVPHAE (80 aa). A phosphoserine mark is found at Ser-158, Ser-170, and Ser-175. The CDC5-binding signature appears at 165 to 170; the sequence is PLVTSS. Over residues 166–188 the composition is skewed to polar residues; sequence LVTSSPIHMSPLQSRQRPVSSLQ. The CLB3-docking motif lies at 189 to 195; it reads PPKGPNF. The CDC14-binding signature appears at 200 to 202; sequence PKL.

In terms of assembly, interacts with CDC5 and CDC14. In terms of processing, phosphorylated by CLB3-CDK1 in metaphase which is required for correct localization at the nuclear envelop and the spindle pole body, and dephosphorylated by CDC14 in early anaphase.

It localises to the nucleus membrane. It is found in the cytoplasm. The protein resides in the cytoskeleton. Its subcellular location is the microtubule organizing center. The protein localises to the spindle pole body. Functionally, specialized component of the nuclear membrane that may be involved in the connection of the spindle pole body (SPB) to the nuclear envelope. Recruits CDC5 to spindle pole bodies in metaphase. This Saccharomyces cerevisiae (strain ATCC 204508 / S288c) (Baker's yeast) protein is CDC5 pindle pole body anchor protein 1.